A 344-amino-acid polypeptide reads, in one-letter code: F17d-G fimbrial adhesin (344 aa).

The signal sequence occupies residues 1 to 22; sequence MTNFYKVFLAVFILVCCNISQA. The receptor-binding lectin domain stretch occupies residues 23 to 199; sequence AVSFIGSTEN…SLNPFTLNDT (177 aa). A carbohydrate is bound by residues 65–66, 110–111, and 139–142; these read AN, DT, and STQG. Cys-75 and Cys-132 are disulfide-bonded. The segment at 200 to 344 is fimbrillin-binding domain; it reads VTSCRLLTPS…GISTFTFSYQ (145 aa). Residues 288 to 308 form a disordered region; that stretch reads LKFGPDSPVKGNENQWQLSTG. Polar residues predominate over residues 299–308; sequence NENQWQLSTG.

Belongs to the fimbrial protein family.

It is found in the fimbrium. Essential fimbrial adhesion factor that mediates binding to N-acetylglucosamine-containing receptors in the host intestinal microvilli, leading to colonization of the intestinal tissue, and diarrhea or septicemia. Also confers adhesiveness to laminin and basement membranes. The polypeptide is F17d-G fimbrial adhesin (f17dG) (Escherichia coli).